The following is a 505-amino-acid chain: L-carnitine/gamma-butyrobetaine antiporter (505 aa).

Helical transmembrane passes span 10 to 30 (IEPKVFFPLLIIVGILCWLTV), 51 to 71 (WGWAFEWYMVVMLFSWFWLVF), 92 to 112 (IFMMFASCTSAAVLFWGSIEI), 143 to 163 (GPLPWATYSFLSVAFAYFFFV), 195 to 215 (FYLVALIFAMGTSLGLATPLV), 231 to 251 (LDAIIITCWIILNAICVACGL), 263 to 283 (SYLSFLMLGWVFIVSGASFIM), 316 to 336 (WTVFYWAWWVIYAIQMSIFLA), 347 to 367 (LCFGMVMGLTASTWILWTVLG), 403 to 423 (LSTATMWGFFILCFIATVTLI), 446 to 466 (LLVRIGWSVLVGIIGIVLLAL), and 475 to 495 (AIIAGGCPLFFVNIMVTLSFI).

Belongs to the BCCT transporter (TC 2.A.15) family. CaiT subfamily. Homotrimer.

Its subcellular location is the cell inner membrane. It catalyses the reaction 4-(trimethylamino)butanoate(in) + (R)-carnitine(out) = 4-(trimethylamino)butanoate(out) + (R)-carnitine(in). The protein operates within amine and polyamine metabolism; carnitine metabolism. In terms of biological role, catalyzes the exchange of L-carnitine for gamma-butyrobetaine. This Salmonella typhi protein is L-carnitine/gamma-butyrobetaine antiporter.